Reading from the N-terminus, the 236-residue chain is Leucyl/phenylalanyl-tRNA--protein transferase (236 aa).

It belongs to the L/F-transferase family.

The protein resides in the cytoplasm. It carries out the reaction N-terminal L-lysyl-[protein] + L-leucyl-tRNA(Leu) = N-terminal L-leucyl-L-lysyl-[protein] + tRNA(Leu) + H(+). The enzyme catalyses N-terminal L-arginyl-[protein] + L-leucyl-tRNA(Leu) = N-terminal L-leucyl-L-arginyl-[protein] + tRNA(Leu) + H(+). The catalysed reaction is L-phenylalanyl-tRNA(Phe) + an N-terminal L-alpha-aminoacyl-[protein] = an N-terminal L-phenylalanyl-L-alpha-aminoacyl-[protein] + tRNA(Phe). Its function is as follows. Functions in the N-end rule pathway of protein degradation where it conjugates Leu, Phe and, less efficiently, Met from aminoacyl-tRNAs to the N-termini of proteins containing an N-terminal arginine or lysine. The sequence is that of Leucyl/phenylalanyl-tRNA--protein transferase from Shewanella woodyi (strain ATCC 51908 / MS32).